Consider the following 78-residue polypeptide: Protein SlyX homolog (78 aa).

It belongs to the SlyX family.

The protein is Protein SlyX homolog of Xanthomonas oryzae pv. oryzae (strain MAFF 311018).